A 694-amino-acid polypeptide reads, in one-letter code: Elongation factor G (694 aa).

One can recognise a tr-type G domain in the interval 6-288 (KLYRNIGIAA…GVIEYLPSPT (283 aa)). GTP is bound by residues 15-22 (AHVDAGKT), 86-90 (DTPGH), and 140-143 (NKMD).

The protein belongs to the TRAFAC class translation factor GTPase superfamily. Classic translation factor GTPase family. EF-G/EF-2 subfamily.

It localises to the cytoplasm. Its function is as follows. Catalyzes the GTP-dependent ribosomal translocation step during translation elongation. During this step, the ribosome changes from the pre-translocational (PRE) to the post-translocational (POST) state as the newly formed A-site-bound peptidyl-tRNA and P-site-bound deacylated tRNA move to the P and E sites, respectively. Catalyzes the coordinated movement of the two tRNA molecules, the mRNA and conformational changes in the ribosome. The protein is Elongation factor G of Legionella pneumophila (strain Paris).